A 307-amino-acid chain; its full sequence is Heme A synthase (307 aa).

Topologically, residues 1–6 (MKFALR) are cytoplasmic. Residues 7–27 (LLSVITTFVMLIVLIGGALVT) traverse the membrane as a helical segment. Topologically, residues 28–65 (KTGSGLGCGRQWPLCHGRFFPEMNPASIIEWSHRMSTG) are extracellular. A disulfide bridge connects residues Cys35 and Cys42. Residue Glu57 is part of the active site. His60 serves as a coordination point for heme o. A helical membrane pass occupies residues 66–86 (VSTILVLALAVLCWKKISPVF). Residues 87–92 (RETKFL) lie on the Cytoplasmic side of the membrane. Residues 93–113 (VIMSIIFLLLQALLGALAVVF) traverse the membrane as a helical segment. Topologically, residues 114 to 121 (GSNALVMA) are extracellular. The helical transmembrane segment at 122–142 (LHFGISLISFASVLLLALLVF) threads the bilayer. His123 contributes to the heme o binding site. The Cytoplasmic portion of the chain corresponds to 143–161 (EATRSETKLVKPLHIGKKM). Residues 162-182 (QFHIYGLITYTYIVVYTGAYV) traverse the membrane as a helical segment. Residues 183–216 (RHTKSSLACSVFPFCSKDGALPAYFNQWVQMSHR) lie on the Extracellular side of the membrane. An intrachain disulfide couples Cys191 to Cys197. Heme b is bound at residue His215. The helical transmembrane segment at 217-237 (AAALLLFVWIFVAMFHAMKHY) threads the bilayer. Over 238–242 (KEQKQ) the chain is Cytoplasmic. Residues 243-263 (LYYGWIISAILITLQAISGVM) form a helical membrane-spanning segment. The Extracellular segment spans residues 264–274 (SVYSQLALGYA). A helical transmembrane segment spans residues 275-295 (LAHSFFISCLFGVLCYFCLLI). His277 is a binding site for heme b. The Cytoplasmic portion of the chain corresponds to 296–307 (ARFKYESKEPFK).

The protein belongs to the COX15/CtaA family. Type 1 subfamily. As to quaternary structure, interacts with CtaB. Requires heme b as cofactor.

It is found in the cell membrane. The catalysed reaction is Fe(II)-heme o + 2 A + H2O = Fe(II)-heme a + 2 AH2. It participates in porphyrin-containing compound metabolism; heme A biosynthesis; heme A from heme O: step 1/1. In terms of biological role, catalyzes the conversion of heme O to heme A by two successive hydroxylations of the methyl group at C8. The first hydroxylation forms heme I, the second hydroxylation results in an unstable dihydroxymethyl group, which spontaneously dehydrates, resulting in the formyl group of heme A. This chain is Heme A synthase, found in Bacillus pumilus (strain SAFR-032).